We begin with the raw amino-acid sequence, 193 residues long: 7-methyl-GTP pyrophosphatase (193 aa).

The active-site Proton acceptor is the aspartate 70.

The protein belongs to the Maf family. YceF subfamily. A divalent metal cation is required as a cofactor.

The protein resides in the cytoplasm. It catalyses the reaction N(7)-methyl-GTP + H2O = N(7)-methyl-GMP + diphosphate + H(+). Functionally, nucleoside triphosphate pyrophosphatase that hydrolyzes 7-methyl-GTP (m(7)GTP). May have a dual role in cell division arrest and in preventing the incorporation of modified nucleotides into cellular nucleic acids. This is 7-methyl-GTP pyrophosphatase from Vibrio cholerae serotype O1 (strain ATCC 39315 / El Tor Inaba N16961).